A 348-amino-acid chain; its full sequence is MSALTPASEVILRHSDEFLSRRVLFAGDLQDTLPAQFEAASVRVHCNQYHHWQQMAKPLGDNAQYSLVADAELVADSDTLIYYWPKSKQEAEFQLCNLLSLLPVGAEIFVVGENRSGVRSAETVLSDFVELVKIDSARRCGLYHGRIDKQASFTLDDWWDEYVTEGVTVKTLPGIFSRDGLDPGSRLLLSTFEPHMKGKVLDIACGAGVLASVLAKQSPKIRLTLSDVSAAAVESSNATLAANALEGSVIASNVYSDIDGRFDMIVSNPPFHDGLQTSLQAVEMLIRGAVTHLPIGGQLRIVANAFLPYPALLDAAFGSHEVLAQTGRFKVYQATVGRPPRTGKGRRR.

This sequence belongs to the methyltransferase superfamily. RsmC family. In terms of assembly, monomer.

The protein resides in the cytoplasm. It catalyses the reaction guanosine(1207) in 16S rRNA + S-adenosyl-L-methionine = N(2)-methylguanosine(1207) in 16S rRNA + S-adenosyl-L-homocysteine + H(+). Functionally, specifically methylates the guanine in position 1207 of 16S rRNA in the 30S particle. In Pectobacterium atrosepticum (strain SCRI 1043 / ATCC BAA-672) (Erwinia carotovora subsp. atroseptica), this protein is Ribosomal RNA small subunit methyltransferase C.